The primary structure comprises 494 residues: Alpha-amylase (494 aa).

Positions 1–26 (MQISKAALLASLAALVYAQPVTLFKR) are cleaved as a signal peptide. Cys57 and Cys65 are oxidised to a cystine. Trp110 lines the substrate pocket. Asn148 serves as a coordination point for Ca(2+). His149 is a substrate binding site. Cys177 and Cys191 form a disulfide bridge. Residue Asp202 participates in Ca(2+) binding. An N-linked (GlcNAc...) asparagine glycan is attached at Asn224. Position 231 (Arg231) interacts with substrate. 3 residues coordinate Ca(2+): Asp233, His237, and Glu257. Asp233 acts as the Nucleophile in catalysis. Residue 236-237 (KH) participates in substrate binding. Glu257 functions as the Proton donor in the catalytic mechanism. Gly261 serves as a coordination point for substrate. An intrachain disulfide couples Cys267 to Cys310. 2 residues coordinate substrate: Asp324 and Arg371. An intrachain disulfide couples Cys462 to Cys493.

It belongs to the glycosyl hydrolase 13 family. The cofactor is Ca(2+).

The protein localises to the secreted. The enzyme catalyses Endohydrolysis of (1-&gt;4)-alpha-D-glucosidic linkages in polysaccharides containing three or more (1-&gt;4)-alpha-linked D-glucose units.. The chain is Alpha-amylase (ALP1) from Saccharomycopsis fibuligera (Yeast).